The chain runs to 86 residues: UPF0335 protein BruAb1_1737 (86 aa).

The protein belongs to the UPF0335 family.

In Brucella abortus biovar 1 (strain 9-941), this protein is UPF0335 protein BruAb1_1737.